Here is a 226-residue protein sequence, read N- to C-terminus: Large ribosomal subunit protein uL1 (226 aa).

The protein belongs to the universal ribosomal protein uL1 family. In terms of assembly, part of the 50S ribosomal subunit.

In terms of biological role, binds directly to 23S rRNA. The L1 stalk is quite mobile in the ribosome, and is involved in E site tRNA release. Protein L1 is also a translational repressor protein, it controls the translation of the L11 operon by binding to its mRNA. This chain is Large ribosomal subunit protein uL1, found in Mycoplasma capricolum subsp. capricolum (strain California kid / ATCC 27343 / NCTC 10154).